Reading from the N-terminus, the 258-residue chain is uncharacterized protein (258 aa).

This is an uncharacterized protein from Acidianus filamentous virus 2 (isolate Italy/Pozzuoli) (AFV-2).